We begin with the raw amino-acid sequence, 443 residues long: Exodeoxyribonuclease 7 large subunit (443 aa).

The protein belongs to the XseA family. Heterooligomer composed of large and small subunits.

It is found in the cytoplasm. It catalyses the reaction Exonucleolytic cleavage in either 5'- to 3'- or 3'- to 5'-direction to yield nucleoside 5'-phosphates.. Bidirectionally degrades single-stranded DNA into large acid-insoluble oligonucleotides, which are then degraded further into small acid-soluble oligonucleotides. The sequence is that of Exodeoxyribonuclease 7 large subunit from Vibrio vulnificus (strain YJ016).